We begin with the raw amino-acid sequence, 438 residues long: tRNA modification GTPase MnmE (438 aa).

Arginine 19, glutamate 76, and lysine 115 together coordinate (6S)-5-formyl-5,6,7,8-tetrahydrofolate. The 153-residue stretch at 211–363 (GYKVAIIGRP…LSKELESYLN (153 aa)) folds into the TrmE-type G domain. GTP is bound by residues 221-226 (NVGKSS), 240-246 (SETAGTT), and 265-268 (DTAG). Positions 225 and 246 each coordinate Mg(2+). Residue lysine 438 coordinates (6S)-5-formyl-5,6,7,8-tetrahydrofolate.

The protein belongs to the TRAFAC class TrmE-Era-EngA-EngB-Septin-like GTPase superfamily. TrmE GTPase family. Homodimer. Heterotetramer of two MnmE and two MnmG subunits. It depends on K(+) as a cofactor.

The protein localises to the cytoplasm. Exhibits a very high intrinsic GTPase hydrolysis rate. Involved in the addition of a carboxymethylaminomethyl (cmnm) group at the wobble position (U34) of certain tRNAs, forming tRNA-cmnm(5)s(2)U34. In Campylobacter fetus subsp. fetus (strain 82-40), this protein is tRNA modification GTPase MnmE.